The following is a 216-amino-acid chain: Large ribosomal subunit protein uL1z (216 aa).

The protein belongs to the universal ribosomal protein uL1 family. As to quaternary structure, interacts with the GTPase NUG2.

The sequence is that of Large ribosomal subunit protein uL1z (RPL10AA) from Arabidopsis thaliana (Mouse-ear cress).